The chain runs to 282 residues: 2-dehydro-3-deoxyphosphooctonate aldolase (282 aa).

It belongs to the KdsA family.

It is found in the cytoplasm. The catalysed reaction is D-arabinose 5-phosphate + phosphoenolpyruvate + H2O = 3-deoxy-alpha-D-manno-2-octulosonate-8-phosphate + phosphate. Its pathway is carbohydrate biosynthesis; 3-deoxy-D-manno-octulosonate biosynthesis; 3-deoxy-D-manno-octulosonate from D-ribulose 5-phosphate: step 2/3. The protein operates within bacterial outer membrane biogenesis; lipopolysaccharide biosynthesis. This Shewanella baltica (strain OS223) protein is 2-dehydro-3-deoxyphosphooctonate aldolase.